A 202-amino-acid chain; its full sequence is MCTGGCARCLGGTLIPLAVFAVLANILLFFPGGKVVDDNSHLSDEVWYFGGILGSGVLMIFPALVFLGLQNNDCCGCCGNESCGKRFAMFTSTLFAVVGFLGAAYSFIVSAVSINKGPKCFMTNNTWGYPFHDGDYLNDQALWSKCEEPRDVVPWNLTLFSILLVIGGIQMVLCAIQVINGLLGTLCGDCQCCGCCGGDRPV.

Topologically, residues M1–C9 are cytoplasmic. A helical membrane pass occupies residues L10–F30. Over P31–Y48 the chain is Extracellular. The helical transmembrane segment at F49–L69 threads the bilayer. Residues Q70 to T93 are Cytoplasmic-facing. A helical transmembrane segment spans residues L94 to I114. Topologically, residues N115–T158 are extracellular. A glycan (N-linked (GlcNAc...) asparagine) is linked at N156. The chain crosses the membrane as a helical span at residues L159 to I179. The Cytoplasmic portion of the chain corresponds to N180 to V202.

It belongs to the L6 tetraspanin family. In terms of tissue distribution, expressed in liver and testis. Up-regulated in regenerating liver after partial hepatectomy.

It is found in the membrane. Functionally, regulates the adhesive and proliferative status of intestinal epithelial cells. Can mediate density-dependent cell proliferation. The protein is Transmembrane 4 L6 family member 4 (Tm4sf4) of Rattus norvegicus (Rat).